A 113-amino-acid chain; its full sequence is CRISPR-associated endoribonuclease Cas2 (113 aa).

Mg(2+) is bound at residue D33.

It belongs to the CRISPR-associated endoribonuclease Cas2 protein family. As to quaternary structure, homodimer, forms a heterotetramer with a Cas1 homodimer. Mg(2+) is required as a cofactor.

Its function is as follows. CRISPR (clustered regularly interspaced short palindromic repeat), is an adaptive immune system that provides protection against mobile genetic elements (viruses, transposable elements and conjugative plasmids). CRISPR clusters contain sequences complementary to antecedent mobile elements and target invading nucleic acids. CRISPR clusters are transcribed and processed into CRISPR RNA (crRNA). Functions as a ssRNA-specific endoribonuclease. Involved in the integration of spacer DNA into the CRISPR cassette. The type III-A Csm effector complex binds crRNA and acts as a crRNA-guided RNase, DNase and cyclic oligoadenylate synthase; binding of target RNA cognate to the crRNA is required for all activities. The protein is CRISPR-associated endoribonuclease Cas2 of Mycobacterium tuberculosis (strain CDC 1551 / Oshkosh).